Here is a 155-residue protein sequence, read N- to C-terminus: Ribonuclease H (155 aa).

The RNase H type-1 domain maps to 4–145; sequence QQKVVEIYTD…ADALARKAIA (142 aa). 4 residues coordinate Mg(2+): Asp-13, Glu-51, Asp-73, and Asp-137.

This sequence belongs to the RNase H family. In terms of assembly, monomer. It depends on Mg(2+) as a cofactor.

Its subcellular location is the cytoplasm. The catalysed reaction is Endonucleolytic cleavage to 5'-phosphomonoester.. Functionally, endonuclease that specifically degrades the RNA of RNA-DNA hybrids. The sequence is that of Ribonuclease H from Bartonella tribocorum (strain CIP 105476 / IBS 506).